Here is a 339-residue protein sequence, read N- to C-terminus: Heat-inducible transcription repressor HrcA (339 aa).

This sequence belongs to the HrcA family.

In terms of biological role, negative regulator of class I heat shock genes (grpE-dnaK-dnaJ and groELS operons). Prevents heat-shock induction of these operons. This Frankia casuarinae (strain DSM 45818 / CECT 9043 / HFP020203 / CcI3) protein is Heat-inducible transcription repressor HrcA.